Here is a 41-residue protein sequence, read N- to C-terminus: Photosystem I reaction center subunit IX (41 aa).

Residues 7-27 form a helical membrane-spanning segment; the sequence is YLSTAPVLLTLWMTFTAGFII.

Belongs to the PsaJ family.

It localises to the plastid. The protein resides in the chloroplast thylakoid membrane. In terms of biological role, may help in the organization of the PsaE and PsaF subunits. This Trieres chinensis (Marine centric diatom) protein is Photosystem I reaction center subunit IX.